Reading from the N-terminus, the 571-residue chain is Streptolysin O (571 aa).

The first 33 residues, 1–33, serve as a signal peptide directing secretion; that stretch reads MSNKKTFKKYSRVAGLLTAALIIGNLVTANAES. The interval 30 to 108 is disordered; the sequence is NAESNKQNTA…KKSEEDHTEE (79 aa). The span at 37 to 48 shows a compositional bias: low complexity; sequence NTASTETTTTNE. 2 stretches are compositionally biased toward basic and acidic residues: residues 50-68 and 79-108; these read PKPE…KTDD and APKE…HTEE. 4 consecutive transmembrane segments (beta stranded) span residues 260 to 273, 280 to 289, 358 to 367, and 375 to 387; these read KSQI…NSKI, IDFKSISKGE, SNDVEAAFSA, and KTNG…LENS. The Conserved undecapeptide signature appears at 529-539; the sequence is ECTGLAWEWWR. The short motif at 561–562 is the Cholesterol binding element; the sequence is TL.

This sequence belongs to the cholesterol-dependent cytolysin family. Homooligomeric pore complex of 35 to 50 subunits; when inserted in the host membrane.

Its subcellular location is the secreted. The protein resides in the host cell membrane. Functionally, a cholesterol-dependent toxin that causes cytolysis by forming pores in cholesterol containing host membranes. After binding to target membranes, the protein undergoes a major conformation change, leading to its insertion in the host membrane and formation of an oligomeric pore complex. Cholesterol is required for binding to host membranes, membrane insertion and pore formation; cholesterol binding is mediated by a Thr-Leu pair in the C-terminus. Can be reversibly inactivated by oxidation. The chain is Streptolysin O (slo) from Streptococcus pyogenes serotype M18 (strain MGAS8232).